Here is a 155-residue protein sequence, read N- to C-terminus: MKIGLCAYSGYKIYPGHGKTMVKVDGKNFTFLNSKCEAAHLMRRNPRKVTWTVLYRRKFKKGQEEEQAKKRTRRTQKYQRAIVGASLSDIMAKRNMKPEVRKAQREQAIKQAKEQKKSTKASKKTTAPPTKGKAAPKAKAAKVSQKAAPRVGGKR.

The segment at 92-155 (AKRNMKPEVR…KAAPRVGGKR (64 aa)) is disordered. Basic and acidic residues predominate over residues 96–117 (MKPEVRKAQREQAIKQAKEQKK). A compositionally biased stretch (low complexity) spans 124–133 (KTTAPPTKGK).

This sequence belongs to the eukaryotic ribosomal protein eL24 family.

The sequence is that of Large ribosomal subunit protein eL24 (RpL24) from Plutella xylostella (Diamondback moth).